A 303-amino-acid chain; its full sequence is 2-dehydropantoate 2-reductase (303 aa).

Residues 7-12, N98, and A122 each bind NADP(+); that span reads GCGALG. N98 provides a ligand contact to substrate. Residue K176 is the Proton donor of the active site. Substrate contacts are provided by N180, N184, N194, and S244. E256 is a binding site for NADP(+).

It belongs to the ketopantoate reductase family. Monomer.

It is found in the cytoplasm. The catalysed reaction is (R)-pantoate + NADP(+) = 2-dehydropantoate + NADPH + H(+). The protein operates within cofactor biosynthesis; (R)-pantothenate biosynthesis; (R)-pantoate from 3-methyl-2-oxobutanoate: step 2/2. In terms of biological role, catalyzes the NADPH-dependent reduction of ketopantoate into pantoic acid. In Escherichia coli O157:H7, this protein is 2-dehydropantoate 2-reductase (panE).